A 160-amino-acid polypeptide reads, in one-letter code: UPF0479 membrane protein YER190C-B (160 aa).

2 consecutive transmembrane segments (helical) span residues 39–59 (IVFCLPFFPALFFVPVQKVLQ) and 136–156 (VPMIWLDVFQVFFVFLVISQH).

This sequence belongs to the UPF0479 family.

The protein resides in the membrane. This chain is UPF0479 membrane protein YER190C-B, found in Saccharomyces cerevisiae (strain ATCC 204508 / S288c) (Baker's yeast).